The primary structure comprises 210 residues: MNSEIESSLTLLKSVEKLVQATSVYKNEDNEEIFLQLKRERQENSNSHEETETLFHESLDRLMKLSSIAGSKVQYELSLNNLYNLLLRTRKQEEEEAFIFPTVSTEEFALEQITFEVSDQMDDDKDSEDDILIKGEEIKKSKKKRQRLDNSTKEFLEKVFEKNKQPNRRERELIAEKHGVSLSQIRVWFTNKRMRKKEPKSKAKSSSNST.

The homeobox DNA-binding region spans 141–200; that stretch reads SKKKRQRLDNSTKEFLEKVFEKNKQPNRRERELIAEKHGVSLSQIRVWFTNKRMRKKEPK.

The protein belongs to the MATA1 family. Forms a heterodimer with ALPHA2.

It is found in the nucleus. Mating type proteins are sequence specific DNA-binding proteins that act as master switches in yeast differentiation by controlling gene expression in a cell type-specific fashion. Transcriptional corepressor that acts in conjunction with ALPHA2 to repress transcription both of homozygote-specific genes and of genes necessary for the white-opaque switch, a prerequisite for mating. The polypeptide is Mating-type-like protein A1 (MTLA1) (Candida albicans (strain SC5314 / ATCC MYA-2876) (Yeast)).